The following is a 287-amino-acid chain: Heavy metal-associated isoprenylated plant protein 4 (287 aa).

2 HMA domains span residues 14–80 and 112–176; these read IITA…VELI and IRTT…KHAE. A metal cation-binding residues include C25, C28, C123, and C126. The stretch at 179 to 235 forms a coiled coil; it reads SSKTEEEKKKEEEDKKKKEEEDKKKKEDEKKKEEEKKKEEENKKKEGEKKKEEVKVE. Residues 181–232 form a disordered region; sequence KTEEEKKKEEEDKKKKEEEDKKKKEDEKKKEEEKKKEEENKKKEGEKKKEEV. Cysteine methyl ester is present on C284. Residue C284 is the site of S-farnesyl cysteine attachment. The propeptide at 285-287 is removed in mature form; it reads RIV.

This sequence belongs to the HIPP family.

Functionally, heavy-metal-binding protein. In Arabidopsis thaliana (Mouse-ear cress), this protein is Heavy metal-associated isoprenylated plant protein 4.